Here is a 339-residue protein sequence, read N- to C-terminus: Tryptophan--tRNA ligase (339 aa).

Residues glutamine 11–threonine 13 and glycine 19–asparagine 20 contribute to the ATP site. The short motif at proline 12–asparagine 20 is the 'HIGH' region element. Aspartate 135 is a binding site for L-tryptophan. ATP-binding positions include glycine 147 to aspartate 149, isoleucine 191, and lysine 200 to serine 204. A 'KMSKS' region motif is present at residues lysine 200–serine 204.

It belongs to the class-I aminoacyl-tRNA synthetase family. In terms of assembly, homodimer.

The protein localises to the cytoplasm. It catalyses the reaction tRNA(Trp) + L-tryptophan + ATP = L-tryptophyl-tRNA(Trp) + AMP + diphosphate + H(+). Functionally, catalyzes the attachment of tryptophan to tRNA(Trp). In Prochlorococcus marinus (strain SARG / CCMP1375 / SS120), this protein is Tryptophan--tRNA ligase.